Consider the following 547-residue polypeptide: Sterol carrier protein 2 (547 aa).

2 positions are modified to phosphoserine: serine 3 and serine 8. Lysine 40 carries the post-translational modification N6-succinyllysine. At lysine 132 the chain carries N6-acetyllysine; alternate. The residue at position 132 (lysine 132) is an N6-succinyllysine; alternate. N6-succinyllysine is present on lysine 168. Lysine 177 carries the post-translational modification N6-acetyllysine. At lysine 183 the chain carries N6-acetyllysine; alternate. Lysine 183 carries the post-translational modification N6-succinyllysine; alternate. N6-succinyllysine is present on residues lysine 211 and lysine 282. N6-acetyllysine; alternate is present on residues lysine 341, lysine 432, lysine 438, lysine 443, and lysine 453. Residues lysine 341, lysine 432, lysine 438, lysine 443, and lysine 453 each carry the N6-succinyllysine; alternate modification. One can recognise an SCP2 domain in the interval 433–543 (ANLIFKEIEK…KLQSLQLQPD (111 aa)). Lysine 464 is modified (N6-succinyllysine). Lysine 470 carries the N6-acetyllysine; alternate modification. Residue lysine 470 is modified to N6-succinyllysine; alternate. Lysine 479 is modified (N6-succinyllysine). Lysine 491 is subject to N6-acetyllysine. 2 positions are modified to N6-succinyllysine: lysine 492 and lysine 511. At serine 516 the chain carries Phosphoserine. Residues lysine 522 and lysine 534 each carry the N6-succinyllysine modification. At serine 537 the chain carries Phosphoserine. An N6-succinyllysine modification is found at lysine 544. A Microbody targeting signal motif is present at residues 545–547 (AKL).

The protein in the N-terminal section; belongs to the thiolase-like superfamily. Thiolase family. In terms of assembly, interacts with PEX5; the interaction is essential for peroxisomal import. Post-translationally, preSCP2, a protein with a molecular mass of about 15 kDa, is processed into its mature form (SCP2) by proteolytic cleavage of a 20 residue leader sequence after translocation into peroxisomes. As to expression, liver &gt; intestine &gt; brain &gt; lung, colon, stomach, spleen, kidney, heart and ovary. In terms of tissue distribution, expressed in liver (at protein level).

Its subcellular location is the peroxisome. It localises to the cytoplasm. The protein localises to the mitochondrion. The enzyme catalyses an acyl-CoA + acetyl-CoA = a 3-oxoacyl-CoA + CoA. It carries out the reaction choloyl-CoA + propanoyl-CoA = 3alpha,7alpha,12alpha-trihydroxy-24-oxo-5beta-cholestan-26-oyl-CoA + CoA. The catalysed reaction is 4,8,12-trimethyltridecanoyl-CoA + propanoyl-CoA = 3-oxopristanoyl-CoA + CoA. It catalyses the reaction hexanoyl-CoA + acetyl-CoA = 3-oxooctanoyl-CoA + CoA. The enzyme catalyses tetradecanoyl-CoA + acetyl-CoA = 3-oxohexadecanoyl-CoA + CoA. It carries out the reaction 3-oxohexadecanedioyl-CoA + CoA = tetradecanedioyl-CoA + acetyl-CoA. The catalysed reaction is propanoyl-CoA + tetradecanoyl-CoA = 3-oxo-2-methylhexadecanoyl-CoA + CoA. It catalyses the reaction butanoyl-CoA + acetyl-CoA = 3-oxohexanoyl-CoA + CoA. The enzyme catalyses octanoyl-CoA + acetyl-CoA = 3-oxodecanoyl-CoA + CoA. It carries out the reaction decanoyl-CoA + acetyl-CoA = 3-oxododecanoyl-CoA + CoA. The catalysed reaction is dodecanoyl-CoA + acetyl-CoA = 3-oxotetradecanoyl-CoA + CoA. It catalyses the reaction hexadecanoyl-CoA + acetyl-CoA = 3-oxooctadecanoyl-CoA + CoA. The enzyme catalyses 3-oxo-(9Z-octadecenoyl)-CoA + CoA = (7Z)-hexadecenoyl-CoA + acetyl-CoA. It carries out the reaction 7-dehydrocholesterol(in) = 7-dehydrocholesterol(out). Functionally, plays a crucial role in the peroxisomal oxidation of branched-chain fatty acids. Catalyzes the last step of the peroxisomal beta-oxidation of branched chain fatty acids and the side chain of the bile acid intermediates di- and trihydroxycoprostanic acids (DHCA and THCA). Also active with medium and long straight chain 3-oxoacyl-CoAs. Stimulates the microsomal conversion of 7-dehydrocholesterol to cholesterol and transfers phosphatidylcholine and 7-dehydrocholesterol between membrances, in vitro. Isoforms SCP2 and SCPx cooperate in peroxisomal oxidation of certain naturally occurring tetramethyl-branched fatty acyl-CoAs. In terms of biological role, mediates the transfer of all common phospholipids, cholesterol and gangliosides from the endoplasmic reticulum to the plasma membrane. May play a role in regulating steroidogenesis. Stimulates the microsomal conversion of 7-dehydrocholesterol to cholesterol. Also binds fatty acids and fatty acyl Coenzyme A (CoA) such as phytanoyl-CoA. Involved in the regulation phospholipid synthesis in endoplasmic reticulum enhancing the incorporation of exogenous fatty acid into glycerides. Seems to stimulate the rate-limiting step in phosphatidic acid formation mediated by GPAT3. Isoforms SCP2 and SCPx cooperate in peroxisomal oxidation of certain naturally occurring tetramethyl-branched fatty acyl-CoAs. The sequence is that of Sterol carrier protein 2 from Rattus norvegicus (Rat).